A 498-amino-acid chain; its full sequence is Glycylpeptide N-tetradecanoyltransferase 2 (498 aa).

The interval 1–88 (MAEDSESAAS…QPSKNPSVPM (88 aa)) is disordered. Acidic residues predominate over residues 15 to 32 (ELDDQDTCGIDGDNEEET). S38 is subject to Phosphoserine. Positions 45–57 (AKKKKKKQKRKKE) are enriched in basic residues. Polar residues predominate over residues 61-86 (SGGTKSDSASDSQEIKIQQPSKNPSV). Residues H117, W122, L250, V252, S258, R260, V261, and A262 each coordinate tetradecanoyl-CoA.

This sequence belongs to the NMT family.

The protein localises to the cytoplasm. It localises to the membrane. The catalysed reaction is N-terminal glycyl-[protein] + tetradecanoyl-CoA = N-tetradecanoylglycyl-[protein] + CoA + H(+). The enzyme catalyses N-terminal glycyl-L-lysyl-[protein] + tetradecanoyl-CoA = N-terminal glycyl-(N(6)-tetradecanoyl)-L-lysyl-[protein] + CoA + H(+). In terms of biological role, adds a myristoyl group to the N-terminal glycine residue of certain cellular and viral proteins. Also able to mediate N-terminal lysine myristoylation of proteins: catalyzes myristoylation of ARF6 on both 'Gly-2' and 'Lys-3'. Lysine myristoylation is required to maintain ARF6 on membranes during the GTPase cycle. This chain is Glycylpeptide N-tetradecanoyltransferase 2, found in Homo sapiens (Human).